The primary structure comprises 275 residues: Large ribosomal subunit protein uL2 (275 aa).

Disordered regions lie at residues 28–59 and 224–275; these read KPYAPLLDTQSSTAGRNNNGHITTRHKGGGHK and AMNP…RHKR. Over residues 35 to 46 the composition is skewed to polar residues; that stretch reads DTQSSTAGRNNN. Residues 50-59 show a composition bias toward basic residues; it reads TTRHKGGGHK.

Belongs to the universal ribosomal protein uL2 family. As to quaternary structure, part of the 50S ribosomal subunit. Forms a bridge to the 30S subunit in the 70S ribosome.

One of the primary rRNA binding proteins. Required for association of the 30S and 50S subunits to form the 70S ribosome, for tRNA binding and peptide bond formation. It has been suggested to have peptidyltransferase activity; this is somewhat controversial. Makes several contacts with the 16S rRNA in the 70S ribosome. This Paraburkholderia phymatum (strain DSM 17167 / CIP 108236 / LMG 21445 / STM815) (Burkholderia phymatum) protein is Large ribosomal subunit protein uL2.